The primary structure comprises 67 residues: ATP synthase F(0) complex subunit 8 (67 aa).

The chain crosses the membrane as a helical span at residues Thr8–Met24. Lys54 is subject to N6-acetyllysine; alternate. Lys54 is modified (N6-succinyllysine; alternate). Residue Lys57 is modified to N6-acetyllysine.

The protein belongs to the ATPase protein 8 family. As to quaternary structure, component of the ATP synthase complex composed at least of ATP5F1A/subunit alpha, ATP5F1B/subunit beta, ATP5MC1/subunit c (homooctomer), MT-ATP6/subunit a, MT-ATP8/subunit 8, ATP5ME/subunit e, ATP5MF/subunit f, ATP5MG/subunit g, ATP5MK/subunit k, ATP5MJ/subunit j, ATP5F1C/subunit gamma, ATP5F1D/subunit delta, ATP5F1E/subunit epsilon, ATP5PF/subunit F6, ATP5PB/subunit b, ATP5PD/subunit d, ATP5PO/subunit OSCP. ATP synthase complex consists of a soluble F(1) head domain (subunits alpha(3) and beta(3)) - the catalytic core - and a membrane F(0) domain - the membrane proton channel (subunits c, a, 8, e, f, g, k and j). These two domains are linked by a central stalk (subunits gamma, delta, and epsilon) rotating inside the F1 region and a stationary peripheral stalk (subunits F6, b, d, and OSCP). Interacts with PRICKLE3.

Its subcellular location is the mitochondrion membrane. In terms of biological role, subunit 8, of the mitochondrial membrane ATP synthase complex (F(1)F(0) ATP synthase or Complex V) that produces ATP from ADP in the presence of a proton gradient across the membrane which is generated by electron transport complexes of the respiratory chain. ATP synthase complex consist of a soluble F(1) head domain - the catalytic core - and a membrane F(1) domain - the membrane proton channel. These two domains are linked by a central stalk rotating inside the F(1) region and a stationary peripheral stalk. During catalysis, ATP synthesis in the catalytic domain of F(1) is coupled via a rotary mechanism of the central stalk subunits to proton translocation. In vivo, can only synthesize ATP although its ATP hydrolase activity can be activated artificially in vitro. Part of the complex F(0) domain. This Dasypus novemcinctus (Nine-banded armadillo) protein is ATP synthase F(0) complex subunit 8.